A 31-amino-acid chain; its full sequence is Bacteriocin leucocin-B (31 aa).

Its subcellular location is the secreted. Functionally, inhibits a wide spectrum of lactic acid bacteria. This chain is Bacteriocin leucocin-B, found in Leuconostoc mesenteroides.